A 344-amino-acid chain; its full sequence is N-acetyl-gamma-glutamyl-phosphate reductase (344 aa).

Cys-148 is a catalytic residue.

The protein belongs to the NAGSA dehydrogenase family. Type 1 subfamily.

The protein localises to the cytoplasm. It catalyses the reaction N-acetyl-L-glutamate 5-semialdehyde + phosphate + NADP(+) = N-acetyl-L-glutamyl 5-phosphate + NADPH + H(+). It functions in the pathway amino-acid biosynthesis; L-arginine biosynthesis; N(2)-acetyl-L-ornithine from L-glutamate: step 3/4. Functionally, catalyzes the NADPH-dependent reduction of N-acetyl-5-glutamyl phosphate to yield N-acetyl-L-glutamate 5-semialdehyde. The sequence is that of N-acetyl-gamma-glutamyl-phosphate reductase from Clostridium botulinum (strain Eklund 17B / Type B).